The sequence spans 258 residues: Phosphate import ATP-binding protein PstB (258 aa).

The 243-residue stretch at 5 to 247 (IDVSGLNAYY…ERIFSNPSVQ (243 aa)) folds into the ABC transporter domain. Residue 37–44 (GPSGCGKS) participates in ATP binding.

Belongs to the ABC transporter superfamily. Phosphate importer (TC 3.A.1.7) family. The complex is composed of two ATP-binding proteins (PstB), two transmembrane proteins (PstC and PstA) and a solute-binding protein (PstS).

The protein resides in the cell membrane. The enzyme catalyses phosphate(out) + ATP + H2O = ADP + 2 phosphate(in) + H(+). In terms of biological role, part of the ABC transporter complex PstSACB involved in phosphate import. Responsible for energy coupling to the transport system. The polypeptide is Phosphate import ATP-binding protein PstB (Streptomyces coelicolor (strain ATCC BAA-471 / A3(2) / M145)).